The following is a 302-amino-acid chain: MSVIAADRKPASDRKPVSDRKLARAAASSDRRFAAISHALLILWSVIVIVPMLWVLMSSFKSTGEILSSPFSLPDHWRFENYANAWTDANIGKYFLNSVIVVVSALILVMLLGAMCAYVLARFEFPGRRLIYYVMLAGLTFPVFLAIVPLFFQLQNFGLLNTRPGLILTYVAFALPFTMFFLYSFFRSLPHDVYEAALIDGAGDWRAFFQVMLPMARPGMAAVAIFNFLGLWNQFLLPVALNTDQDKWVLTQGMAAYASSQVYDIDYGALFAAIVVTVVPVLLVYCVFQRRIAGSVSQGTFR.

Helical transmembrane passes span 40–60, 99–119, 131–151, 166–186, 221–241, and 268–288; these read LLIL…MSSF, VIVV…CAYV, IYYV…VPLF, LILT…YSFF, AAVA…PVAL, and GALF…YCVF. In terms of domain architecture, ABC transmembrane type-1 spans 95–288; it reads FLNSVIVVVS…VPVLLVYCVF (194 aa).

This sequence belongs to the binding-protein-dependent transport system permease family. As to quaternary structure, the complex is composed of two ATP-binding proteins (MsiK), two transmembrane proteins (NgcF and NgcG) and a solute-binding protein (NgcE).

Its subcellular location is the cell membrane. Functionally, part of the ABC transporter complex NgcEFG-MsiK involved in N,N'-diacetylchitobiose ((GlcNAc)2) uptake. Responsible for the translocation of the substrate across the membrane. The chain is Diacetylchitobiose uptake system permease protein NgcG from Streptomyces coelicolor (strain ATCC BAA-471 / A3(2) / M145).